A 190-amino-acid polypeptide reads, in one-letter code: dCTP deaminase, dUMP-forming (190 aa).

DCTP contacts are provided by residues 101–106, D119, 127–129, Q148, Y162, and Q174; these read KSSLGR and TLE. E129 serves as the catalytic Proton donor/acceptor. Residues 162 to 184 form a disordered region; it reads YGSAKVGSKYQGQRGPTPSRSYQ. A compositionally biased stretch (polar residues) spans 171 to 184; sequence YQGQRGPTPSRSYQ.

This sequence belongs to the dCTP deaminase family. As to quaternary structure, homotrimer.

It carries out the reaction dCTP + 2 H2O = dUMP + NH4(+) + diphosphate. It participates in pyrimidine metabolism; dUMP biosynthesis; dUMP from dCTP: step 1/1. Its function is as follows. Bifunctional enzyme that catalyzes both the deamination of dCTP to dUTP and the hydrolysis of dUTP to dUMP without releasing the toxic dUTP intermediate. The polypeptide is dCTP deaminase, dUMP-forming (Mycobacterium sp. (strain JLS)).